We begin with the raw amino-acid sequence, 349 residues long: MPLPKRFRLNAKNYFLTYPQCSISKEERLAQLQNLSTPVNKKYIKICKESHEDGQPHLHVLIQFEGKYQCTNNRFFDLVSSTRSAHFHPNIQGAKSSSDVKTYIDKDGDTVEWGEFQIDGRSARGGQQSANDTYAKALNSASAEEALQIIKEEQPQHFFLQFHNIVSNANRIFQTPPEPWVPPFQQASFNNVPAIMTQWVSDNVCDAAARPMRPLSLVVEGPSRTGKTLWARSLGPHNYICGHMDLSPKIYSNNAWYNVIDDIPPHYVKHFKEFMGAQRDWQSNCKYGKPIQIKGGIPTIFLCNPGPQSSYKDYLSEEKNRSLNDWVQKNAIYVTIEEAIFTTGSQTSP.

Positions 8-116 (RLNAKNYFLT…DGDTVEWGEF (109 aa)) constitute a CRESS-DNA virus Rep endonuclease domain. The RCR-1 signature appears at 15 to 18 (FLTY). A divalent metal cation contacts are provided by Glu-49, His-57, and His-59. An RCR-2 motif is present at residues 57-59 (HLH). Tyr-103 serves as the catalytic For DNA cleavage activity. The RCR-3 signature appears at 103 to 106 (YIDK). Asp-107 provides a ligand contact to a divalent metal cation. Residues 143–153 (AEEALQIIKEE) are binding to RBR1. The interval 156–176 (QHFFLQFHNIVSNANRIFQTP) is oligomerization. Residue 221–228 (GPSRTGKT) participates in ATP binding.

It belongs to the geminiviridae Rep protein family. Homooligomer. Interacts with the replication enhancer protein (REn). Interacts with host retinoblastoma-related protein 1 (RBR1), and may thereby induce the transcription of host replicative enzymes even if the cell is not dividing anymore. Interacts with host PCNA. Interacts with host SCE1 protein. Requires Mg(2+) as cofactor. Mn(2+) serves as cofactor.

The protein localises to the host nucleus. Functionally, essential for the replication of viral ssDNA. The closed circular ssDNA genome is first converted to a superhelical dsDNA. Rep binds a specific region at the genome origin of replication. It introduces an endonucleolytic nick within the conserved sequence 5'-TAATATTAC-3' in the intergenic region of the genome present in all geminiviruses, thereby initiating the rolling circle replication (RCR). Following cleavage, binds covalently to the 5'-phosphate of DNA as a tyrosyl ester. The cleavage gives rise to a free 3'-OH that serves as a primer for the cellular DNA polymerase. The polymerase synthesizes the (+) strand DNA by rolling circle mechanism. After one round of replication, a Rep-catalyzed nucleotidyl transfer reaction releases a circular single-stranded virus genome, thereby terminating the replication. Displays origin-specific DNA cleavage, nucleotidyl transferase, ATPase and helicase activities. The sequence is that of Replication-associated protein from Capsicum annuum (Capsicum pepper).